Here is a 349-residue protein sequence, read N- to C-terminus: Short-wave-sensitive opsin 1 (349 aa).

The Extracellular segment spans residues 1 to 34 (MSKMPEEEEFYLFKNISSVGPWDGPQYHIAPVWA). N-linked (GlcNAc...) asparagine glycosylation occurs at N15. The helical transmembrane segment at 35–59 (FQLQAAFMGIVFLAGLPLNSMVLVA) threads the bilayer. The Cytoplasmic portion of the chain corresponds to 60–71 (TVRYKKLRHPLN). A helical membrane pass occupies residues 72-97 (YVLVNVSVGGFLLCIFSVLPVFVNSC). Residues 98–111 (NGYFVFGRHVCALE) lie on the Extracellular side of the membrane. A disulfide bond links C108 and C185. The chain crosses the membrane as a helical span at residues 112 to 131 (GFLGTVAGLVTGWSLAFLAF). The Cytoplasmic segment spans residues 132–150 (ERYIVICKPFGNFRFSSKH). Residues 151–174 (ALMVVLTTWTIGIGVSIPPFFGWS) traverse the membrane as a helical segment. Over 175 to 200 (RYIAEGLQCSCGPDWYTVGTKYRSEY) the chain is Extracellular. A helical membrane pass occupies residues 201–228 (YTWFLFIFCFIVPLSLICFSYAQLLRAL). Residues 229–250 (KAVAAQQQESATTQKAEREVSR) are Cytoplasmic-facing. Residues 251-274 (MVVVMVGSFCVCYVPYAALAMYMV) form a helical membrane-spanning segment. At 275 to 282 (NNRNHGLD) the chain is on the extracellular side. The chain crosses the membrane as a helical span at residues 283–307 (LRLVSIPAFFSKSSCIYNPIIYCFM). Position 294 is an N6-(retinylidene)lysine (K294). The Cytoplasmic portion of the chain corresponds to 308-349 (NKQFRACIMEMVCGKAMTDESDISSSQKTEVSTVSSSQVGPN).

Belongs to the G-protein coupled receptor 1 family. Opsin subfamily. Phosphorylated on some or all of the serine and threonine residues present in the C-terminal region.

Its subcellular location is the cell membrane. The protein resides in the photoreceptor inner segment. The protein localises to the cell projection. It is found in the cilium. It localises to the photoreceptor outer segment. Its subcellular location is the cytoplasm. The protein resides in the perinuclear region. Visual pigments are the light-absorbing molecules that mediate vision. They consist of an apoprotein, opsin, covalently linked to cis-retinal. Required for the maintenance of cone outer segment organization in the ventral retina, but not essential for the maintenance of functioning cone photoreceptors. Involved in ensuring correct abundance and localization of retinal membrane proteins. May increase spectral sensitivity in dim light. The sequence is that of Short-wave-sensitive opsin 1 (OPN1SW) from Saimiri boliviensis boliviensis (Bolivian squirrel monkey).